The primary structure comprises 316 residues: D-alanine--D-alanine ligase (316 aa).

The ATP-grasp domain maps to 108–310 (ERYEELSVVK…FDELVDLIIK (203 aa)). 138–193 (EEKIGLPCVVKPRKEGSSIGTHICFSKEELLDALKNEFKNYDEMIVQEYIKGKEIT) contributes to the ATP binding site. D265, E277, and N279 together coordinate Mg(2+).

This sequence belongs to the D-alanine--D-alanine ligase family. Mg(2+) is required as a cofactor. Mn(2+) serves as cofactor.

Its subcellular location is the cytoplasm. It carries out the reaction 2 D-alanine + ATP = D-alanyl-D-alanine + ADP + phosphate + H(+). It participates in cell wall biogenesis; peptidoglycan biosynthesis. Cell wall formation. This Fervidobacterium nodosum (strain ATCC 35602 / DSM 5306 / Rt17-B1) protein is D-alanine--D-alanine ligase.